A 2528-amino-acid chain; its full sequence is Highly reducing polyketide synthase pspA (2528 aa).

The disordered stretch occupies residues 1 to 53; it reads MLAQDVEFVDLPPPEATAGAATTDNETSSFNSNPVPTPSEASSIGPPHQLPVP. Positions 24–42 are enriched in polar residues; it reads DNETSSFNSNPVPTPSEAS. The region spanning 63–483 is the Ketosynthase family 3 (KS3) domain; that stretch reads VEPMAICGMA…GSNAHVLLGS (421 aa). Active-site for beta-ketoacyl synthase activity residues include cysteine 235, histidine 371, and histidine 406. The tract at residues 590-909 is malonyl-CoA:ACP transacylase (MAT) domain; that stretch reads TFTGQGAQWA…HKDLLKAVGE (320 aa). An N-terminal hotdog fold region spans residues 961–1089; sequence HDILGSRVLE…GQVCAGSDRE (129 aa). Positions 961–1230 are dehydratase (DH) domain; that stretch reads HDILGSRVLE…VSNGHVTIDI (270 aa). The 284-residue stretch at 961–1244 folds into the PKS/mFAS DH domain; sequence HDILGSRVLE…MSAIGDAADA (284 aa). Residue histidine 993 is the Proton acceptor; for dehydratase activity of the active site. The tract at residues 1099 to 1244 is C-terminal hotdog fold; the sequence is PRQLSRRGWY…MSAIGDAADA (146 aa). Aspartate 1160 functions as the Proton donor; for dehydratase activity in the catalytic mechanism. A methyltransferase (CMet) domain region spans residues 1409–1587; it reads VFLELLAHRK…GFSGINLVSH (179 aa). The tract at residues 1803–2119 is enoyl reductase (ER) (ER) domain; it reads GLVDTLCWKS…RGQHIGKIVI (317 aa). Positions 2143 to 2322 are ketoreductase (KR) domain; the sequence is RAYLFVGGLG…ASTVNIGVIQ (180 aa). One can recognise a Carrier domain in the interval 2447 to 2525; the sequence is ETAELLAGEI…DLGVLAQKKL (79 aa). Serine 2485 carries the O-(pantetheine 4'-phosphoryl)serine modification.

It catalyses the reaction 9 malonyl-CoA + acetyl-CoA + S-adenosyl-L-methionine + 13 NADPH + 20 H(+) = soppiline A + S-adenosyl-L-homocysteine + 9 CO2 + 13 NADP(+) + 10 CoA + 7 H2O. Its pathway is secondary metabolite biosynthesis. Functionally, highly reducing polyketide synthase; part of the gene cluster that mediates the biosynthesis of the alkylresorcinols called soppilines. The biosynthesis starts with the HR-PKS pspA-catalyzed carbon chain assembly through nine chain elongation cycles, using acetyl CoA and malonyl CoA as a starter and extender units, respectively, to produce the polyketide soppiline A. In the first round, the KR, DH, and CMeT domains work to produce 2-methyl-2-butenyl thioester. In rounds 2 to 5, the KR, DH, and ER domains fully catalyze the reduction of the elongated beta-ketothioester, resulting in the insertion of eight methylene units. The unusual Z,E,Z-triene motif is likely constructed during rounds 6 to 8. Typically, the DH domain introduces a double bond at an alpha,beta-position of an elongated polyketide chain, with the dehydration of a beta-hydroxy group. The last extension cycle would be carried out with L-oriented beta-ketoreduction by the KR domain to produce beta-hydroxy carboxylic acid soppiline A. The type III PKS pspB intercepts the elongated polyketide chain at round 8 from the HR-PKS pspA, followed by a tri-keto extension and decarboxylative aldol cyclization to produce 1,3,5-trisubstituted alkylresorcinol soppiline B. Subsequently, the cytochrome P450 monooxygenase pspC catalyzes three-step oxidations at the C-4 methyl group to carboxylic acid to yield soppiline C. In Penicillium soppii, this protein is Highly reducing polyketide synthase pspA.